The chain runs to 363 residues: Protein RecA (363 aa).

78 to 85 serves as a coordination point for ATP; the sequence is GPESGGKT.

It belongs to the RecA family.

It is found in the cytoplasm. Its function is as follows. Can catalyze the hydrolysis of ATP in the presence of single-stranded DNA, the ATP-dependent uptake of single-stranded DNA by duplex DNA, and the ATP-dependent hybridization of homologous single-stranded DNAs. It interacts with LexA causing its activation and leading to its autocatalytic cleavage. Probably involved in base excision repair. Following severe irradiation (7 kGy of gamma irradiation) genomic DNA is fragmented. DNA is progressively degraded for the first 1.5 hours after IR, in a step promoted by RecA and counterbalanced by DNA Pol I and Pol III, followed by massive DNA synthesis and genome reassembly in the next hour. Optimal priming of DNA synthesis requires both RecA and RadA, Pol III initiates DNA synthesis while both Pol I and Pol III are required for its continuation. In the absence of RecA the majority of the chromosome is still reconstituted, via either single-strand annealing or non-homologous end joining. This chain is Protein RecA, found in Deinococcus radiodurans (strain ATCC 13939 / DSM 20539 / JCM 16871 / CCUG 27074 / LMG 4051 / NBRC 15346 / NCIMB 9279 / VKM B-1422 / R1).